The chain runs to 204 residues: MSDQLIDRTMAFAGILQAVAQVQHIARHGNSDRDSLAACLNTVLVTNPDTTSDVYADKVALNKGYQLIINQLGDAKDKDVEVTRYLVGILALERKLARGNAMSILSERINQIHRQLHHFEITDEQVIANFAGIYSDIISTLGPKIQISGNPEYLKQSQVQEKIRALLLSAMRSAVLWRQLGGKRRHLVFARKTIVDTAKKSLTL.

This sequence belongs to the HflD family.

Its subcellular location is the cytoplasm. It is found in the cell inner membrane. The chain is High frequency lysogenization protein HflD homolog from Shewanella sediminis (strain HAW-EB3).